A 117-amino-acid chain; its full sequence is G antigen 4 (117 aa).

A disordered region spans residues 1–117 (MSWRGRSTYY…PEEGEKQSQC (117 aa)). Acidic residues-rich tracts occupy residues 32–45 (FSDE…EEGE) and 87–96 (ECEDGPDGQE). The span at 103 to 117 (EEVKTPEEGEKQSQC) shows a compositional bias: basic and acidic residues.

This sequence belongs to the GAGE family. Expressed in a variety of tumor tissues but not in normal tissues, except testis.

Antigen, recognized on melanoma by autologous cytolytic T-lymphocytes. In Homo sapiens (Human), this protein is G antigen 4.